The sequence spans 156 residues: Small ribosomal subunit protein uS7 (156 aa).

It belongs to the universal ribosomal protein uS7 family. As to quaternary structure, part of the 30S ribosomal subunit. Contacts proteins S9 and S11.

One of the primary rRNA binding proteins, it binds directly to 16S rRNA where it nucleates assembly of the head domain of the 30S subunit. Is located at the subunit interface close to the decoding center, probably blocks exit of the E-site tRNA. The polypeptide is Small ribosomal subunit protein uS7 (Vibrio cholerae serotype O1 (strain ATCC 39315 / El Tor Inaba N16961)).